Here is an 874-residue protein sequence, read N- to C-terminus: ATP-dependent RNA helicase DDX54 (874 aa).

Positions 1-76 (MAAGRRVGPG…FPTSECVSDV (76 aa)) are disordered. Residues 20-30 (WKKKRLRKRRT) show a composition bias toward basic residues. The residue at position 30 (Thr30) is a Phosphothreonine. Residues Ser33, Ser38, Ser40, and Ser74 each carry the phosphoserine modification. Residues 39–50 (DSDDGEFEIQAE) are compositionally biased toward acidic residues. Residues 95–123 (GGFQSMGLSYPVFKGIMKKGYKVPTPIQR) carry the Q motif motif. The Helicase ATP-binding domain maps to 126 to 298 (IPVILDGKDV…RAGLTEPVLI (173 aa)). 139-146 (ARTGSGKT) lines the ATP pocket. The DEAD box signature appears at 246–249 (DEAD). The Helicase C-terminal domain occupies 328–472 (YLLQNVVRPQ…ARPCEEPSVA (145 aa)). Polar residues predominate over residues 581–590 (ASSKDPSSQM). The segment at 581–687 (ASSKDPSSQM…PKDFDSERGL (107 aa)) is disordered. Residues 636 to 645 (TVEGVFTEVV) are compositionally biased toward low complexity. Basic and acidic residues predominate over residues 664 to 685 (ETRQRDQEFYVPYRPKDFDSER). Ser688 and Ser690 each carry phosphoserine. The segment at 712–874 (AQNMSRGQQQ…SRKGKMRKRM (163 aa)) is disordered. The segment covering 713-722 (QNMSRGQQQL) has biased composition (polar residues). 2 stretches are compositionally biased toward basic and acidic residues: residues 737-747 (QEDKKKIKTES) and 755-771 (YKRD…KIDD). Residues Ser774 and Ser780 each carry the phosphoserine modification. The segment covering 812 to 823 (MRSELKTKEQIL) has biased composition (basic and acidic residues). Residues 864–874 (PSRKGKMRKRM) show a composition bias toward basic residues.

The protein belongs to the DEAD box helicase family. DDX54/DBP10 subfamily. In terms of assembly, interacts in a hormone-dependent manner with nuclear receptors.

The protein localises to the nucleus. The protein resides in the nucleolus. It catalyses the reaction ATP + H2O = ADP + phosphate + H(+). In terms of biological role, has RNA-dependent ATPase activity. Represses the transcriptional activity of nuclear receptors. The polypeptide is ATP-dependent RNA helicase DDX54 (Ddx54) (Mus musculus (Mouse)).